The primary structure comprises 245 residues: Adapter protein MecA (245 aa).

The protein belongs to the MecA family. Homodimer.

In terms of biological role, enables the recognition and targeting of unfolded and aggregated proteins to the ClpC protease or to other proteins involved in proteolysis. This chain is Adapter protein MecA, found in Streptococcus pneumoniae (strain ATCC BAA-255 / R6).